Here is a 132-residue protein sequence, read N- to C-terminus: Small ribosomal subunit protein uS8 (132 aa).

It belongs to the universal ribosomal protein uS8 family. In terms of assembly, part of the 30S ribosomal subunit. Contacts proteins S5 and S12.

In terms of biological role, one of the primary rRNA binding proteins, it binds directly to 16S rRNA central domain where it helps coordinate assembly of the platform of the 30S subunit. The sequence is that of Small ribosomal subunit protein uS8 from Brucella ovis (strain ATCC 25840 / 63/290 / NCTC 10512).